The sequence spans 420 residues: Gamma-glutamyl phosphate reductase (420 aa).

The protein belongs to the gamma-glutamyl phosphate reductase family.

The protein resides in the cytoplasm. The enzyme catalyses L-glutamate 5-semialdehyde + phosphate + NADP(+) = L-glutamyl 5-phosphate + NADPH + H(+). Its pathway is amino-acid biosynthesis; L-proline biosynthesis; L-glutamate 5-semialdehyde from L-glutamate: step 2/2. Catalyzes the NADPH-dependent reduction of L-glutamate 5-phosphate into L-glutamate 5-semialdehyde and phosphate. The product spontaneously undergoes cyclization to form 1-pyrroline-5-carboxylate. In Neisseria meningitidis serogroup A / serotype 4A (strain DSM 15465 / Z2491), this protein is Gamma-glutamyl phosphate reductase.